The primary structure comprises 403 residues: Dynactin subunit 2-A (403 aa).

The segment at 1–26 is disordered; it reads MADPKYADLPGIARNEPDVYETSDLP. Residues 99 to 132 adopt a coiled-coil conformation; sequence PQQKYQRLLHEVQELTQEVEKTQSTVKESAAEEK. The segment at 183–203 is disordered; it reads AAKTRKNPEGKSPAKGPGPDT. Residues 381 to 401 are a coiled coil; sequence KENLATVEDNFSNIDGRIKKL.

Belongs to the dynactin subunit 2 family. Subunit of dynactin, a multiprotein complex part of a tripartite complex with dynein and a adapter, such as BICDL1, BICD2 or HOOK3. The dynactin complex is built around ACTR1A/ACTB filament and consists of an actin-related filament composed of a shoulder domain, a pointed end and a barbed end. Its length is defined by its flexible shoulder domain. The soulder is composed of 2 DCTN1 subunits, 4 DCTN2 and 2 DCTN3.

Its subcellular location is the cytoplasm. The protein localises to the cytoskeleton. It localises to the microtubule organizing center. It is found in the centrosome. The protein resides in the membrane. In terms of biological role, part of the dynactin complex that activates the molecular motor dynein for ultra-processive transport along microtubules. In the dynactin soulder domain, binds the ACTR1A filament and acts as a molecular ruler to determine the length. Modulates cytoplasmic dynein binding to an organelle, and plays a role in prometaphase chromosome alignment and spindle organization during mitosis. Involved in anchoring microtubules to centrosomes. The polypeptide is Dynactin subunit 2-A (dctn2-a) (Xenopus laevis (African clawed frog)).